The chain runs to 125 residues: Secreted RxLR effector protein 22 (125 aa).

The signal sequence occupies residues 1-26; sequence MRLIYSALVTAAAMVAISNGSTPARG. The disordered stretch occupies residues 21 to 66; sequence STPARGNEVETRSLRGGNEVDSSMSDDGERAARGGGRVRSQASGVT. The RxLR-dEER motif lies at 32–50; that stretch reads RSLRGGNEVDSSMSDDGER.

Belongs to the RxLR effector family.

The protein localises to the secreted. The protein resides in the host nucleus. Its function is as follows. Effector that acts as a broad suppressor of cell death to interrupt plant immunity. Inhibits cell death induced by cell death-inducing proteins, including the PAMP elicitor INF1 from P.infestans. In Plasmopara viticola (Downy mildew of grapevine), this protein is Secreted RxLR effector protein 22.